We begin with the raw amino-acid sequence, 135 residues long: Interleukin-4 (135 aa).

A signal peptide spans 1–24; that stretch reads MGLTSQLIPALVCLLVCTSHFVHG. Intrachain disulfides connect Cys48/Cys85 and Cys70/Cys105. 2 N-linked (GlcNAc...) asparagine glycosylation sites follow: Asn62 and Asn96.

This sequence belongs to the IL-4/IL-13 family.

It localises to the secreted. In terms of biological role, participates in at least several B-cell activation processes as well as of other cell types. It is a costimulator of DNA-synthesis. It induces the expression of class II MHC molecules on resting B-cells. It enhances both secretion and cell surface expression of IgE and IgG1. It also regulates the expression of the low affinity Fc receptor for IgE (CD23) on both lymphocytes and monocytes. Positively regulates IL31RA expression in macrophages. Stimulates autophagy in dendritic cells by interfering with mTORC1 signaling and through the induction of RUFY4. The chain is Interleukin-4 (IL4) from Ovis aries (Sheep).